We begin with the raw amino-acid sequence, 958 residues long: Voltage-gated inwardly rectifying potassium channel KCNH6 (958 aa).

Residues 1-261 lie on the Cytoplasmic side of the membrane; the sequence is MPVRRGHVAP…YSPFKAVWDW (261 aa). The region spanning 41 to 70 is the PAS domain; the sequence is IIYCNDGFCELFGYSRVEVMQQPCTCDFLT. Residues 92-144 form the PAC domain; that stretch reads CKVDILYYRKDASSFRCLVDVVPVKNEDGAVIMFILNFEDLAQLLAKCSSRSL. Residues 262–282 traverse the membrane as a helical segment; that stretch reads LILLLVIYTAVFTPYSAAFLL. Residues 283–298 lie on the Extracellular side of the membrane; sequence SDQDESRRGACSYTCS. A helical transmembrane segment spans residues 299–319; the sequence is PLTVVDLIVDIMFVVDIVINF. Residues 320–340 lie on the Cytoplasmic side of the membrane; it reads RTTYVNTNDEVVSHPRRIAVH. A helical transmembrane segment spans residues 341 to 361; that stretch reads YFKGWFLIDMVAAIPFDLLIF. Residues 362–370 are Extracellular-facing; that stretch reads RTGSDETTT. A helical; Voltage-sensor membrane pass occupies residues 371 to 391; it reads LIGLLKTARLLRLVRVARKLD. Residues 392–398 are Cytoplasmic-facing; that stretch reads RYSEYGA. A helical membrane pass occupies residues 399 to 419; sequence AVLFLLMCTFALIAHWLACIW. The Extracellular portion of the chain corresponds to 420–463; the sequence is YAIGNVERPYLEHKIGWLDSLGVQLGKRYNGSDPASGPSVQDKY. Asn-449 is a glycosylation site (N-linked (GlcNAc...) (complex) asparagine). Positions 464–484 form an intramembrane region, pore-forming; it reads VTALYFTFSSLTSVGFGNVSP. A Selectivity filter motif is present at residues 476–481; sequence SVGFGN. Residues 485–490 are Extracellular-facing; sequence NTNSEK. The helical transmembrane segment at 491 to 511 threads the bilayer; sequence VFSICVMLIGSLMYASIFGNV. At 512–958 the chain is on the cytoplasmic side; the sequence is SAIIQRLYSG…DPGFAGSWGH (447 aa). Residues 594 to 694 form a cNMP-binding domain region; sequence AFSGAGKGCL…IQRADLLEVL (101 aa). 2 disordered regions span residues 720–751 and 845–910; these read GLHS…PPLS and TTSP…PPLA. Residues 724-745 are compositionally biased toward polar residues; sequence SPRQAPGSQDHQGFFLSDNQSD.

This sequence belongs to the potassium channel family. H (Eag) (TC 1.A.1.20) subfamily. Kv11.2/KCNH6 sub-subfamily. The potassium channel is probably composed of a homo- or heterotetrameric complex of pore-forming alpha subunits that can associate only within their subfamily. In terms of tissue distribution, expressed in prolactin-secreting adenomas.

It localises to the cell membrane. It carries out the reaction K(+)(in) = K(+)(out). Functionally, pore-forming (alpha) subunit of voltage-gated inwardly rectifying potassium channel. Characterized by unusual gating kinetics by producing relatively small outward currents during membrane depolarization and large inward currents during subsequent repolarization which reflect a rapid inactivation during depolarization and quick recovery from inactivation but slow deactivation (closing) during repolarization. Activates even more slowly than KCNH2. In Homo sapiens (Human), this protein is Voltage-gated inwardly rectifying potassium channel KCNH6.